Reading from the N-terminus, the 289-residue chain is Oxaloacetate decarboxylase (289 aa).

S50 is a binding site for substrate. A Mg(2+)-binding site is contributed by D88. Substrate is bound by residues R159 and H235.

Belongs to the isocitrate lyase/PEP mutase superfamily. Oxaloacetate decarboxylase family. In terms of assembly, homotetramer; dimer of dimers. Mg(2+) serves as cofactor.

The catalysed reaction is oxaloacetate + H(+) = pyruvate + CO2. Catalyzes the decarboxylation of oxaloacetate into pyruvate. Seems to play a role in maintaining cellular concentrations of bicarbonate and pyruvate. The sequence is that of Oxaloacetate decarboxylase from Pseudomonas entomophila (strain L48).